The chain runs to 518 residues: Probable high-affinity hexose transporter ght7 (518 aa).

Topologically, residues 1 to 27 (MRDFQSRFADRYNQITNSYSYSSSRQG) are cytoplasmic. The helical transmembrane segment at 28-48 (LITGMVNVGSFFGCLLSSPVA) threads the bilayer. The Extracellular portion of the chain corresponds to 49–54 (DKIGKR). A helical membrane pass occupies residues 55-75 (LSIIVWTTVYLIGIIIQVTTV). Residues 76-77 (PS) lie on the Cytoplasmic side of the membrane. Residues 78-98 (WVQILVAKIWTGLSIGALSVI) form a helical membrane-spanning segment. Over 99–112 (TPGYQSEVAPAIMR) the chain is Extracellular. Residues 113 to 133 (GAIVTTYQLFITLGIFIAACI) form a helical membrane-spanning segment. Residues 134 to 149 (NMGTHKYSHGTTAQWR) are Cytoplasmic-facing. Residues 150-170 (ISIGINLLWGIITLVGIIFLP) form a helical membrane-spanning segment. Residues 171-236 (ESPRYLIAIG…IFNANIRYRT (66 aa)) lie on the Extracellular side of the membrane. A helical membrane pass occupies residues 237–257 (FLGMAVMMFQQLTGANYYFYY). The Cytoplasmic segment spans residues 258–271 (GTQVFRGTGMDSPY). The helical transmembrane segment at 272–292 (LAALIPDAVNCGCTFGAIFVL) threads the bilayer. The Extracellular portion of the chain corresponds to 293-298 (EFFGRR). Residues 299–319 (SPLIVGGIWQYICFFIYAAVG) form a helical membrane-spanning segment. Topologically, residues 320–333 (DRALYHKNGTSNHR) are cytoplasmic. Residues 334–354 (AGAVMIVFSCLFIFSFSQTWA) form a helical membrane-spanning segment. Over 355–374 (PAAYVIVGESYPVRYRSKCA) the chain is Extracellular. A helical transmembrane segment spans residues 375-395 (AVATSANWFWNFLISFFTPFI). The Cytoplasmic segment spans residues 396 to 402 (TNSIGFK). A helical transmembrane segment spans residues 403-423 (YGYIFASCNLTGAAIIFLFVH). The Extracellular segment spans residues 424–518 (ETKGRTLEEI…IRPDKREPRL (95 aa)). Residues 477–506 (IENTDNQGDSGSFQTSTPDDSRPEQNQASA) show a composition bias toward polar residues. The tract at residues 477-518 (IENTDNQGDSGSFQTSTPDDSRPEQNQASATYIRPDKREPRL) is disordered.

Belongs to the major facilitator superfamily. Sugar transporter (TC 2.A.1.1) family.

The protein resides in the membrane. This Schizosaccharomyces pombe (strain 972 / ATCC 24843) (Fission yeast) protein is Probable high-affinity hexose transporter ght7 (ght7).